The following is a 572-amino-acid chain: AAA ATPase forming ring-shaped complexes (572 aa).

Low complexity predominate over residues 1 to 18; the sequence is MTTASQQTSSHSTASSTS. The tract at residues 1 to 30 is disordered; that stretch reads MTTASQQTSSHSTASSTSRKGNNNDATPSL. Residues 42 to 70 are a coiled coil; sequence TRNAKLVEMLKASRDKLDALNEQIRALSD. ATP is bound at residue 258 to 263; the sequence is GCGKTL. The tract at residues 543 to 572 is disordered; it reads VAHHNRKTTTETEATEPEGTDSGKGHTDAS. Residues 563-572 show a composition bias toward basic and acidic residues; sequence DSGKGHTDAS.

This sequence belongs to the AAA ATPase family. Homohexamer. Assembles into a hexameric ring structure.

The polypeptide is AAA ATPase forming ring-shaped complexes (Corynebacterium kroppenstedtii (strain DSM 44385 / JCM 11950 / CIP 105744 / CCUG 35717)).